The primary structure comprises 929 residues: Isoleucine--tRNA ligase (929 aa).

Positions 58–68 match the 'HIGH' region motif; it reads PYANGDIHIGH. E563 contributes to the L-isoleucyl-5'-AMP binding site. A 'KMSKS' region motif is present at residues 605–609; the sequence is KMSKS. Residue K608 participates in ATP binding. C892, C895, C912, and C915 together coordinate Zn(2+).

This sequence belongs to the class-I aminoacyl-tRNA synthetase family. IleS type 1 subfamily. As to quaternary structure, monomer. Zn(2+) serves as cofactor.

Its subcellular location is the cytoplasm. It carries out the reaction tRNA(Ile) + L-isoleucine + ATP = L-isoleucyl-tRNA(Ile) + AMP + diphosphate. Functionally, catalyzes the attachment of isoleucine to tRNA(Ile). As IleRS can inadvertently accommodate and process structurally similar amino acids such as valine, to avoid such errors it has two additional distinct tRNA(Ile)-dependent editing activities. One activity is designated as 'pretransfer' editing and involves the hydrolysis of activated Val-AMP. The other activity is designated 'posttransfer' editing and involves deacylation of mischarged Val-tRNA(Ile). The sequence is that of Isoleucine--tRNA ligase from Neisseria gonorrhoeae (strain NCCP11945).